The following is a 519-amino-acid chain: Cilia- and flagella-associated protein 157 (519 aa).

Positions 1–11 (MPPKKKGKRGP) are enriched in basic residues. A disordered region spans residues 1 to 25 (MPPKKKGKRGPSAKTKEKETVRVAS). 2 coiled-coil regions span residues 28–185 (VTEQ…EKKV) and 241–356 (IELI…QRTL).

It belongs to the CFAP157 family.

The protein localises to the cytoplasm. It localises to the cytoskeleton. The protein resides in the cilium basal body. Its function is as follows. Specifically required during spermatogenesis for flagellum morphogenesis and sperm motility. The polypeptide is Cilia- and flagella-associated protein 157 (Xenopus tropicalis (Western clawed frog)).